A 210-amino-acid polypeptide reads, in one-letter code: MDKNKNISMAVIKRLPKYHRYLNELMKNDVDRISSKELGEKIGFTASQIRQDLNCFGDFGQQGYGYNVKELYTQINSILGLDKEYNAVLIGAGNIGQAIANYSRFDKLGIMITAIFDANPKLIGIKIRDIEIRDIDELGSFLKSDSVDIGVICVPKKSAQKVSDELVNGGIRGIWNFAPIDLVVPEDVKVENVHLSESVSTLIYQLHQQR.

A DNA-binding region (H-T-H motif) is located at residues 17 to 56 (KYHRYLNELMKNDVDRISSKELGEKIGFTASQIRQDLNCF). 91–96 (GAGNIG) contributes to the NAD(+) binding site.

It belongs to the transcriptional regulatory Rex family. In terms of assembly, homodimer.

The protein resides in the cytoplasm. Modulates transcription in response to changes in cellular NADH/NAD(+) redox state. This Clostridium botulinum (strain Alaska E43 / Type E3) protein is Redox-sensing transcriptional repressor Rex.